Consider the following 112-residue polypeptide: Ribonuclease P protein component (112 aa).

This sequence belongs to the RnpA family. Consists of a catalytic RNA component (M1 or rnpB) and a protein subunit.

It carries out the reaction Endonucleolytic cleavage of RNA, removing 5'-extranucleotides from tRNA precursor.. RNaseP catalyzes the removal of the 5'-leader sequence from pre-tRNA to produce the mature 5'-terminus. It can also cleave other RNA substrates such as 4.5S RNA. The protein component plays an auxiliary but essential role in vivo by binding to the 5'-leader sequence and broadening the substrate specificity of the ribozyme. The polypeptide is Ribonuclease P protein component (Mesomycoplasma hyopneumoniae (strain 7448) (Mycoplasma hyopneumoniae)).